A 79-amino-acid chain; its full sequence is uncharacterized protein (79 aa).

The stretch at 4–43 forms a coiled coil; it reads QENEDLRKQLVEASELLKSQAKELKDAHQQQKLALQDFLE.

This is an uncharacterized protein from Homo sapiens (Human).